Consider the following 261-residue polypeptide: Carbonic anhydrase 1 (261 aa).

Residues 1–31 (MASPDWGYDDKNGPEQWSKLYPIANGNNQSP) form a disordered region. Ala2 carries the post-translational modification N-acetylalanine. One can recognise an Alpha-carbonic anhydrase domain in the interval 4-261 (PDWGYDDKNG…LKGRTVRASF (258 aa)). The active-site Proton donor/acceptor is His65. Residues His65, His68, His95, His97, and His120 each contribute to the Zn(2+) site. Substrate contacts are provided by residues Thr200 and 200-201 (TH). Residue His201 participates in Zn(2+) binding. The interval 241 to 261 (PMQHNNRPTQPLKGRTVRASF) is disordered.

This sequence belongs to the alpha-carbonic anhydrase family. Zn(2+) serves as cofactor.

It is found in the cytoplasm. It catalyses the reaction hydrogencarbonate + H(+) = CO2 + H2O. The enzyme catalyses urea = cyanamide + H2O. Its activity is regulated as follows. Activated by histamine, imidazole, L-adrenaline, L- and D-histidine, and L- and D-phenylalanine. Inhibited by coumarins, sulfonamide derivatives such as acetazolamide, benzenesulfonamide and derivatives (4-carboxyethylbenzene-sulfonamide, 4-carboxyethylbenzene-sulfonamide ethyl ester, 4-(acetyl-2-aminoethyl)benzene-sulfonamide, 4-aminoethylbenzene-sulfonamide), and 'prong inhibitors' BR15, BR17, BR22 and BR30. Activated by a short exposition to Foscarnet (phosphonoformate trisodium salt), but inhibited by a long one. Esterase activity weakly reduced by cyanamide. Catalyzes the reversible hydration of carbon dioxide. Can hydrate cyanamide to urea. This is Carbonic anhydrase 1 (CA1) from Homo sapiens (Human).